Here is a 190-residue protein sequence, read N- to C-terminus: MKRFMQIWKPAVVGFLLLTLMCGVVYPGIVTIFASAAFHDKANGSIIEEKRADGTTGKVGSAEIGQTFTKPEYLIGRAASDGVATNLNPTSEEQKQLVEKRIAWWHKLDPTNNRVIPMDLVTASASGVDPDISEAAAAYQVDRISRERGISTKQVKEIIAEHTSDRLLGFWGEPTVNVLQVNLALDRLKM.

A helical transmembrane segment spans residues V13–F33.

Belongs to the KdpC family. As to quaternary structure, the system is composed of three essential subunits: KdpA, KdpB and KdpC.

The protein localises to the cell membrane. Functionally, part of the high-affinity ATP-driven potassium transport (or Kdp) system, which catalyzes the hydrolysis of ATP coupled with the electrogenic transport of potassium into the cytoplasm. This subunit acts as a catalytic chaperone that increases the ATP-binding affinity of the ATP-hydrolyzing subunit KdpB by the formation of a transient KdpB/KdpC/ATP ternary complex. This Listeria monocytogenes serotype 4b (strain CLIP80459) protein is Potassium-transporting ATPase KdpC subunit.